We begin with the raw amino-acid sequence, 117 residues long: Cell cycle protein GpsB (117 aa).

A coiled-coil region spans residues 32–70; it reads LDNVIKDYDAFVKENQRLQDENERLLAKVDELTRQVQVG.

Belongs to the GpsB family. As to quaternary structure, forms polymers through the coiled coil domains. Interacts with PBP1, MreC and EzrA.

It is found in the cytoplasm. Functionally, divisome component that associates with the complex late in its assembly, after the Z-ring is formed, and is dependent on DivIC and PBP2B for its recruitment to the divisome. Together with EzrA, is a key component of the system that regulates PBP1 localization during cell cycle progression. Its main role could be the removal of PBP1 from the cell pole after pole maturation is completed. Also contributes to the recruitment of PBP1 to the division complex. Not essential for septum formation. In Levilactobacillus brevis (strain ATCC 367 / BCRC 12310 / CIP 105137 / JCM 1170 / LMG 11437 / NCIMB 947 / NCTC 947) (Lactobacillus brevis), this protein is Cell cycle protein GpsB.